Consider the following 552-residue polypeptide: ATP synthase subunit alpha (552 aa).

173–180 (GDRQTGKT) provides a ligand contact to ATP. A disordered region spans residues 526 to 552 (ASPLDPSAVRKESIPVHRAPARTDDEG). Basic and acidic residues predominate over residues 533–552 (AVRKESIPVHRAPARTDDEG).

This sequence belongs to the ATPase alpha/beta chains family. As to quaternary structure, F-type ATPases have 2 components, CF(1) - the catalytic core - and CF(0) - the membrane proton channel. CF(1) has five subunits: alpha(3), beta(3), gamma(1), delta(1), epsilon(1). CF(0) has three main subunits: a(1), b(2) and c(9-12). The alpha and beta chains form an alternating ring which encloses part of the gamma chain. CF(1) is attached to CF(0) by a central stalk formed by the gamma and epsilon chains, while a peripheral stalk is formed by the delta and b chains.

It localises to the cell membrane. It carries out the reaction ATP + H2O + 4 H(+)(in) = ADP + phosphate + 5 H(+)(out). In terms of biological role, produces ATP from ADP in the presence of a proton gradient across the membrane. The alpha chain is a regulatory subunit. This Frankia alni (strain DSM 45986 / CECT 9034 / ACN14a) protein is ATP synthase subunit alpha.